A 41-amino-acid chain; its full sequence is Hemoglobin subunit beta (41 aa).

Residues 1 to 41 form the Globin domain; sequence LGNVLVCVLAHHFGKEFTPQVQAAYQKVVAGVANALAHKYH. Lys-39 is subject to N6-acetyllysine.

This sequence belongs to the globin family. As to quaternary structure, heterotetramer of two alpha chains and two beta chains. Red blood cells.

Its function is as follows. Involved in oxygen transport from the lung to the various peripheral tissues. The chain is Hemoglobin subunit beta (HBB) from Colobus guereza (Mantled guereza).